The following is a 157-amino-acid chain: MGVIEFLFALAQDMILAAIPAVGFAMVFNVPVRALRWCALLGAIGHGSRMILMTSGLNIEWSTFMASMLVGTIGIQWSRWYLAHPKVFTVAAVIPMFPGISAYTAMISAVKISQLGYSESLMITLLTNFLTASSIVGALSIGLSIPGLWLYRKRPRV.

4 consecutive transmembrane segments (helical) span residues 8-28 (FALA…AMVF), 50-70 (MILM…SMLV), 87-107 (VFTV…TAMI), and 129-149 (FLTA…PGLW).

It belongs to the ThrE exporter (TC 2.A.79) family. As to quaternary structure, the transporter is composed of YjjB and YjjP.

The protein localises to the cell inner membrane. Functionally, involved in succinate export with YjjP. Both proteins are required for export. This is Probable succinate transporter subunit YjjB from Escherichia coli (strain SE11).